A 143-amino-acid chain; its full sequence is D-aminoacyl-tRNA deacylase (143 aa).

Positions Gly-135–Pro-136 match the Gly-cisPro motif, important for rejection of L-amino acids motif.

Belongs to the DTD family. Homodimer.

It is found in the cytoplasm. It catalyses the reaction glycyl-tRNA(Ala) + H2O = tRNA(Ala) + glycine + H(+). It carries out the reaction a D-aminoacyl-tRNA + H2O = a tRNA + a D-alpha-amino acid + H(+). An aminoacyl-tRNA editing enzyme that deacylates mischarged D-aminoacyl-tRNAs. Also deacylates mischarged glycyl-tRNA(Ala), protecting cells against glycine mischarging by AlaRS. Acts via tRNA-based rather than protein-based catalysis; rejects L-amino acids rather than detecting D-amino acids in the active site. By recycling D-aminoacyl-tRNA to D-amino acids and free tRNA molecules, this enzyme counteracts the toxicity associated with the formation of D-aminoacyl-tRNA entities in vivo and helps enforce protein L-homochirality. This is D-aminoacyl-tRNA deacylase from Nocardia farcinica (strain IFM 10152).